We begin with the raw amino-acid sequence, 153 residues long: Small ribosomal subunit protein uS5 (153 aa).

One can recognise an S5 DRBM domain in the interval Phe15–Val78.

Belongs to the universal ribosomal protein uS5 family. Part of the 30S ribosomal subunit. Contacts proteins S4 and S8.

In terms of biological role, with S4 and S12 plays an important role in translational accuracy. Its function is as follows. Located at the back of the 30S subunit body where it stabilizes the conformation of the head with respect to the body. This is Small ribosomal subunit protein uS5 from Helicobacter acinonychis (strain Sheeba).